We begin with the raw amino-acid sequence, 450 residues long: Divalent metal cation transporter MntH (450 aa).

Helical transmembrane passes span 44–64 (LLAFVGPGYLVSVGYMDPGNW), 77–97 (TLLSVILLSNLMAILLQSLAA), 121–141 (FLLWLACEAAIIACDLAEVIG), 152–172 (IPLIGGALIAALDAFLLLLLM), 181–201 (AFVIALLAVIAVCFAVQIVAA), 218–238 (IFTNPEMLYIAIGIIGATVMP), 273–293 (IALMLALFINAAILVVAAATF), 310–330 (LLSPLLGLGIASTLFAIALLA), 366–386 (GIAIIPVIIVTAIYGERGTAD), 387–407 (LLVFSQVVLSMQLPFAVIPLV), and 419–439 (FAISPYVAAIAWIVAGVIVVL).

It belongs to the NRAMP family.

It is found in the cell inner membrane. H(+)-stimulated, divalent metal cation uptake system. The protein is Divalent metal cation transporter MntH of Bradyrhizobium diazoefficiens (strain JCM 10833 / BCRC 13528 / IAM 13628 / NBRC 14792 / USDA 110).